The primary structure comprises 378 residues: UPF0754 membrane protein BALH_0780 (378 aa).

2 helical membrane passes run 1-21 and 357-377; these read MNIW…GGFT and YLGA…LLFL.

The protein belongs to the UPF0754 family.

It localises to the cell membrane. The polypeptide is UPF0754 membrane protein BALH_0780 (Bacillus thuringiensis (strain Al Hakam)).